A 1487-amino-acid polypeptide reads, in one-letter code: MQCYTELTPPTAVTHSVTLQLVPGQGTNLAVAKASLLQIFKTKVVSAEIDTYATLNGTNTSSKAAAAGRYDSRLVNDDDGFEASFLGGDNIAARADRANSAKLVLVAEVTLPGTMTGLARIKKPSGSSSGGADCLLLSFRDARLSLVEWNVERNTLETVSIHYYEKEELVGSPWVAPLHQYPTLLVADPASRCAALKFSERNLAILPFKQPDEDMDMDNWDEELDGPRPKKDLSGAVANGASTIEDTPYSPSFVLRLSKLEASLLHPVHLAFLHEYRDPTIGVLSSTKTASNSLGHKDHFTYMVFTLDLQQRASTTILAVNGLPQDLFRVVALPAPVGGALLVGANELIHIDQSGKSNGIAVNPLTKQTTSFSLVDQADLDLRLEGCAIDVLAAELGEFLLILNDGRLGLITFRIDGRTVSGLSIKMIAPEAGGSVIQSRVTSLSRMGRSTMFVGSEEGDSVLLGWTRRQGQTQKRKSRLQDADLDLDLDDEDLEDDDDDDLYGEESASPEQAMSAAKAIKSGDLNFRIHDRLLSIAPIQKMTYGQPVTLPDSEEERNSEGVRSDLQLVCAVGRGKASALAIMNLAIQPKIIGRFEFPEARGFWTVCAKKPIPKTLVGDKGPMNNDYDTSGQYHKFMIVAKVDLDGYETSDVYALTAAGFESLTGTEFEPAAGFTVEAGTMGKDSRILQVLKSEVRCYDGDLGLSQIVPMLDEETGAEPRVRTASIADPFLLLIRDDFSVFIAEMSPKLLELEEVEKEDQILTSTKWLAGCLYTDTSGVFADETVGKGTKDNILMFLLSTSGVLYIYRLPDLTKPVYVAEGLSYIPPGLSADYAARKGTAKESVAEILVADLGDTTHKSPYLILRHANDDLTLYQPYRLKATAGQPFSKSLFFQKVPNSTFAKAPEEKPADDDEPHNAQRFLPMRRCSNISGYSTVFLPGSSPSFILKTAKSSPRVLSLQGSGVQAMSSFHTEGCEHGFIYADTNGIARVTQIPTDSSYAELGLSVKKIPIGVDTQSVAYHPPTQAYVVGCNDVEPFELPKDDDYHKEWARENITFKPMVDRGVLKLLSGITWTVIDTVEMEPCETVLCVETLNLEVSESTNERKQLIAVGTALIKGEDLPTRGRVYVFDIADVIPEPGKPETSKKLKLVAKEDIPRGAVTALSEVGTQGLMLVAQGQKCMVRGLKEDGTLLPVAFMDMNCYVTSVKELPGTGLCLMADAFKGVWFTGYTEEPYKMMLFGKSSTRMEVLNADFLPDGKELYIVASDADGHIHILQFDPEHPKSLQGHLLLHRTTFNTGAHHPTSSLLLPAVYPNPSSLSSNSEENSPHILLLASPTGVLATLRPLQENAYRRLSSLAVQLTNGLPHPAGLNPKGYRLPSPSASASMQLPGVDAGIGRNIVDGKILERFLELGTGKRQEMAGRAGYVVGTGAHGVNPAGSGKMMGGGGGLSLGGLRLNGLHGQEGGMEWEEVRGELGVVLGWSGLGYF.

Acidic residues predominate over residues 486–504 (DLDLDDEDLEDDDDDDLYG). The segment at 486 to 513 (DLDLDDEDLEDDDDDDLYGEESASPEQA) is disordered.

It belongs to the CFT1 family.

It is found in the nucleus. RNA-binding component of the cleavage and polyadenylation factor (CPF) complex, which plays a key role in polyadenylation-dependent pre-mRNA 3'-end formation and cooperates with cleavage factors including the CFIA complex and hrp1/CFIB. Involved in poly(A) site recognition. May be involved in coupling transcription termination and mRNA 3'-end formation. This is Protein cft1 (paa-3) from Neurospora crassa (strain ATCC 24698 / 74-OR23-1A / CBS 708.71 / DSM 1257 / FGSC 987).